We begin with the raw amino-acid sequence, 330 residues long: Fructose-1,6-bisphosphatase class 1 (330 aa).

Mg(2+) is bound by residues Glu-84, Asp-103, Leu-105, and Asp-106. Residues 106–109, Asn-196, and Lys-262 each bind substrate; that span reads DGSS. Glu-268 is a Mg(2+) binding site.

Belongs to the FBPase class 1 family. As to quaternary structure, homotetramer. It depends on Mg(2+) as a cofactor.

It localises to the cytoplasm. The catalysed reaction is beta-D-fructose 1,6-bisphosphate + H2O = beta-D-fructose 6-phosphate + phosphate. It functions in the pathway carbohydrate biosynthesis; gluconeogenesis. This chain is Fructose-1,6-bisphosphatase class 1, found in Shewanella baltica (strain OS185).